The primary structure comprises 332 residues: Oxygen-dependent coproporphyrinogen-III oxidase (332 aa).

S119 lines the coproporphyrinogen III pocket. H133 functions as the Proton donor in the catalytic mechanism. Coproporphyrinogen III-binding positions include 135-137 and 284-285; these read NVR and GR.

This sequence belongs to the aerobic coproporphyrinogen-III oxidase family. Homodimer.

It catalyses the reaction coproporphyrinogen III + O2 + 2 H(+) = protoporphyrinogen IX + 2 CO2 + 2 H2O. Its pathway is porphyrin-containing compound metabolism; protoporphyrin-IX biosynthesis; protoporphyrinogen-IX from coproporphyrinogen-III (O2 route): step 1/1. Involved in the heme biosynthesis. Catalyzes the aerobic oxidative decarboxylation of propionate groups of rings A and B of coproporphyrinogen-III to yield the vinyl groups in protoporphyrinogen-IX. This Dictyostelium discoideum (Social amoeba) protein is Oxygen-dependent coproporphyrinogen-III oxidase (cpox).